The primary structure comprises 490 residues: V-type proton ATPase subunit B (490 aa).

Arg-380 provides a ligand contact to ATP.

Belongs to the ATPase alpha/beta chains family. In terms of assembly, V-ATPase is a heteromultimeric enzyme made up of two complexes: the ATP-hydrolytic V1 complex and the proton translocation V0 complex. The V1 complex consists of three catalytic AB heterodimers that form a heterohexamer, three peripheral stalks each consisting of EG heterodimers, one central rotor including subunits D and F, and the regulatory subunits C and H. The proton translocation complex V0 consists of the proton transport subunit a, a ring of proteolipid subunits c9c'', rotary subunit d, subunits e and f, and the accessory subunits VhaAC45 and ATP6AP2. In terms of tissue distribution, expressed in Malpighian tubules, rectum, antennal palps and oviduct.

Its function is as follows. Non-catalytic subunit of the V1 complex of vacuolar(H+)-ATPase (V-ATPase), a multisubunit enzyme composed of a peripheral complex (V1) that hydrolyzes ATP and a membrane integral complex (V0) that translocates protons. V-ATPase is responsible for acidifying and maintaining the pH of intracellular compartments and in some cell types, is targeted to the plasma membrane, where it is responsible for acidifying the extracellular environment. Essential for the proper assembly and activity of V-ATPase. The protein is V-type proton ATPase subunit B (Vha55) of Drosophila melanogaster (Fruit fly).